The sequence spans 163 residues: Succinate dehydrogenase assembly factor 2-B, mitochondrial (163 aa).

The N-terminal 23 residues, 1–23 (MFRQLRLTMDISGWIFMPWRRSL), are a transit peptide targeting the mitochondrion.

This sequence belongs to the SDHAF2 family. In terms of assembly, interacts with the flavoprotein subunit within the SDH catalytic dimer.

It is found in the mitochondrion matrix. Functionally, plays an essential role in the assembly of succinate dehydrogenase (SDH), an enzyme complex (also referred to as respiratory complex II) that is a component of both the tricarboxylic acid (TCA) cycle and the mitochondrial electron transport chain, and which couples the oxidation of succinate to fumarate with the reduction of ubiquinone (coenzyme Q) to ubiquinol. Required for flavinylation (covalent attachment of FAD) of the flavoprotein subunit of the SDH catalytic dimer. The sequence is that of Succinate dehydrogenase assembly factor 2-B, mitochondrial from Drosophila ananassae (Fruit fly).